The following is a 52-amino-acid chain: Insulin (52 aa).

Cystine bridges form between Cys-7–Cys-38, Cys-19–Cys-51, and Cys-37–Cys-42.

This sequence belongs to the insulin family. In terms of assembly, heterodimer of a B chain and an A chain linked by two disulfide bonds.

It localises to the secreted. Insulin decreases blood glucose concentration. It increases cell permeability to monosaccharides, amino acids and fatty acids. It accelerates glycolysis, the pentose phosphate cycle, and glycogen synthesis in liver. This chain is Insulin (ins), found in Acipenser gueldenstaedtii (Russian sturgeon).